The chain runs to 806 residues: Hyperosmolality-gated Ca2+ permeable channel 1.8 (806 aa).

The next 10 membrane-spanning stretches (helical) occupy residues 7 to 27, 102 to 122, 157 to 177, 375 to 395, 427 to 447, 467 to 487, 512 to 532, 576 to 596, 626 to 646, and 650 to 670; these read IGVSALINLFGAFLFLIAFAV, IYTLGLKIFAPVMVLALVVLV, KFFFHIAVEYIFTFWACFMLY, LVIGVSVFALVFFYMIPIAFV, FLPGLALKIFLWILPTVLLIM, YYYFMLVNVFLGSIIAGTAFE, ATFFITYIMVDGWAGIAGEIL, FLLGIVYTAVTPILLPFILIF, VHGRIIASLLISQLLLMGLLA, and AADSTPLLIILPILTLSFHKY. The disordered stretch occupies residues 726–786; it reads SSSSSSEKET…HYASAYEQSS (61 aa). Over residues 731–750 the composition is skewed to basic and acidic residues; that stretch reads SEKETHQEETPEVRVDKHET. A Phosphothreonine modification is found at T735. The span at 751–762 shows a compositional bias: polar residues; the sequence is QSSSPVTELGTS. A compositionally biased stretch (low complexity) spans 775 to 786; it reads SSHYASAYEQSS.

The protein belongs to the CSC1 (TC 1.A.17) family.

The protein resides in the golgi apparatus membrane. The protein localises to the cell membrane. Functionally, acts as an osmosensitive calcium-permeable cation channel. This is Hyperosmolality-gated Ca2+ permeable channel 1.8 from Arabidopsis thaliana (Mouse-ear cress).